The primary structure comprises 760 residues: 5-methyltetrahydropteroyltriglutamate--homocysteine methyltransferase (760 aa).

Residues 17–20 (RELK) and lysine 118 contribute to the 5-methyltetrahydropteroyltri-L-glutamate site. L-homocysteine contacts are provided by residues 436–438 (IGS) and glutamate 489. Residues 436 to 438 (IGS) and glutamate 489 contribute to the L-methionine site. Residues 520–521 (RC) and tryptophan 566 each bind 5-methyltetrahydropteroyltri-L-glutamate. L-homocysteine is bound at residue aspartate 604. An L-methionine-binding site is contributed by aspartate 604. Glutamate 610 is a binding site for 5-methyltetrahydropteroyltri-L-glutamate. Residues histidine 646, cysteine 648, and glutamate 670 each coordinate Zn(2+). Histidine 699 functions as the Proton donor in the catalytic mechanism. Cysteine 731 is a binding site for Zn(2+).

This sequence belongs to the vitamin-B12 independent methionine synthase family. It depends on Zn(2+) as a cofactor.

The enzyme catalyses 5-methyltetrahydropteroyltri-L-glutamate + L-homocysteine = tetrahydropteroyltri-L-glutamate + L-methionine. It functions in the pathway amino-acid biosynthesis; L-methionine biosynthesis via de novo pathway; L-methionine from L-homocysteine (MetE route): step 1/1. Catalyzes the transfer of a methyl group from 5-methyltetrahydrofolate to homocysteine resulting in methionine formation. This is 5-methyltetrahydropteroyltriglutamate--homocysteine methyltransferase from Vibrio parahaemolyticus serotype O3:K6 (strain RIMD 2210633).